We begin with the raw amino-acid sequence, 621 residues long: Very-long-chain aldehyde decarbonylase GL1-5 (621 aa).

A run of 5 helical transmembrane segments spans residues I99–L119, G126–H146, L186–F206, F224–T244, and M332–V352. Positions V138–T272 constitute a Fatty acid hydroxylase domain.

This sequence belongs to the sterol desaturase family. In terms of assembly, homodimer. Expressed in panicles, developing spikelets, stamens and hulls and, at low levels, in roots, developing seeds, flag leaves and seedling shoots. Strongly expressed in the epidermal cells of anthers.

The protein resides in the endoplasmic reticulum membrane. The catalysed reaction is a long-chain fatty aldehyde + 2 NADPH + O2 + H(+) = a long-chain alkane + formate + 2 NADP(+) + H2O. Functionally, aldehyde decarbonylase involved in the conversion of aldehydes to alkanes. Core component of a very-long-chain alkane synthesis complex. Required for the biosynthesis of very-long-chain fatty acids (including polyesters) in cuticles, anther tapetum and pollen exine. This chain is Very-long-chain aldehyde decarbonylase GL1-5, found in Oryza sativa subsp. japonica (Rice).